A 217-amino-acid polypeptide reads, in one-letter code: Uracil-DNA glycosylase (217 aa).

Asp-62 functions as the Proton acceptor in the catalytic mechanism.

Belongs to the uracil-DNA glycosylase (UDG) superfamily. UNG family.

It localises to the cytoplasm. It carries out the reaction Hydrolyzes single-stranded DNA or mismatched double-stranded DNA and polynucleotides, releasing free uracil.. Functionally, excises uracil residues from the DNA which can arise as a result of misincorporation of dUMP residues by DNA polymerase or due to deamination of cytosine. In Streptococcus pyogenes serotype M28 (strain MGAS6180), this protein is Uracil-DNA glycosylase.